The chain runs to 253 residues: 5'/3'-nucleotidase SurE (253 aa).

Aspartate 8, aspartate 9, serine 39, and asparagine 92 together coordinate a divalent metal cation.

The protein belongs to the SurE nucleotidase family. Requires a divalent metal cation as cofactor.

It is found in the cytoplasm. The enzyme catalyses a ribonucleoside 5'-phosphate + H2O = a ribonucleoside + phosphate. It carries out the reaction a ribonucleoside 3'-phosphate + H2O = a ribonucleoside + phosphate. The catalysed reaction is [phosphate](n) + H2O = [phosphate](n-1) + phosphate + H(+). Its function is as follows. Nucleotidase with a broad substrate specificity as it can dephosphorylate various ribo- and deoxyribonucleoside 5'-monophosphates and ribonucleoside 3'-monophosphates with highest affinity to 3'-AMP. Also hydrolyzes polyphosphate (exopolyphosphatase activity) with the preference for short-chain-length substrates (P20-25). Might be involved in the regulation of dNTP and NTP pools, and in the turnover of 3'-mononucleotides produced by numerous intracellular RNases (T1, T2, and F) during the degradation of various RNAs. The protein is 5'/3'-nucleotidase SurE of Salmonella typhimurium (strain LT2 / SGSC1412 / ATCC 700720).